A 397-amino-acid polypeptide reads, in one-letter code: Argininosuccinate synthase (397 aa).

An ATP-binding site is contributed by 9-17 (AYSGGLDTS). L-citrulline is bound at residue Y87. G117 is a binding site for ATP. Residues T119, N123, and D124 each coordinate L-aspartate. Residue N123 coordinates L-citrulline. R127, S175, S184, E257, and Y269 together coordinate L-citrulline.

Belongs to the argininosuccinate synthase family. Type 1 subfamily. Homotetramer.

It is found in the cytoplasm. The enzyme catalyses L-citrulline + L-aspartate + ATP = 2-(N(omega)-L-arginino)succinate + AMP + diphosphate + H(+). The protein operates within amino-acid biosynthesis; L-arginine biosynthesis; L-arginine from L-ornithine and carbamoyl phosphate: step 2/3. This is Argininosuccinate synthase from Dictyoglomus turgidum (strain DSM 6724 / Z-1310).